The sequence spans 878 residues: Alanine--tRNA ligase (878 aa).

Residues His567, His571, Cys669, and His673 each coordinate Zn(2+).

Belongs to the class-II aminoacyl-tRNA synthetase family. Zn(2+) is required as a cofactor.

The protein localises to the cytoplasm. The enzyme catalyses tRNA(Ala) + L-alanine + ATP = L-alanyl-tRNA(Ala) + AMP + diphosphate. Catalyzes the attachment of alanine to tRNA(Ala) in a two-step reaction: alanine is first activated by ATP to form Ala-AMP and then transferred to the acceptor end of tRNA(Ala). Also edits incorrectly charged Ser-tRNA(Ala) and Gly-tRNA(Ala) via its editing domain. In Rickettsia felis (strain ATCC VR-1525 / URRWXCal2) (Rickettsia azadi), this protein is Alanine--tRNA ligase.